Consider the following 257-residue polypeptide: Flap endonuclease Xni (257 aa).

D109 is a Mg(2+) binding site. One can recognise a 5'-3' exonuclease domain in the interval 165–255 (LKPEQLADYW…FNLQDIRYEK (91 aa)). 4 residues coordinate K(+): L176, A177, I187, and I190. Residues 189–194 (GIGPKA) are interaction with DNA.

This sequence belongs to the Xni family. Requires Mg(2+) as cofactor. K(+) serves as cofactor.

Has flap endonuclease activity. During DNA replication, flap endonucleases cleave the 5'-overhanging flap structure that is generated by displacement synthesis when DNA polymerase encounters the 5'-end of a downstream Okazaki fragment. The polypeptide is Flap endonuclease Xni (Aliivibrio salmonicida (strain LFI1238) (Vibrio salmonicida (strain LFI1238))).